The sequence spans 163 residues: Ribonuclease P protein subunit p25-like protein (163 aa).

2 disordered regions span residues 1–22 and 129–163; these read MEHYRKAGSVELPAPSPMPQLP and NECGYQPPGAPPGLGSMPSSSCGPRSRRRARDTRS. Low complexity predominate over residues 143–152; sequence GSMPSSSCGP. Positions 153 to 163 are enriched in basic residues; the sequence is RSRRRARDTRS.

Belongs to the histone-like Alba family.

Its subcellular location is the nucleus. Its function is as follows. May be a component of ribonuclease P or MRP. This is Ribonuclease P protein subunit p25-like protein (RPP25L) from Homo sapiens (Human).